Reading from the N-terminus, the 209-residue chain is Large ribosomal subunit protein uL3 (209 aa).

The segment at 127–152 (SGGPSSHGSKFHRHLGSTGQAATPSR) is disordered. Residues 143–152 (STGQAATPSR) show a composition bias toward polar residues.

Belongs to the universal ribosomal protein uL3 family. Part of the 50S ribosomal subunit. Forms a cluster with proteins L14 and L19.

One of the primary rRNA binding proteins, it binds directly near the 3'-end of the 23S rRNA, where it nucleates assembly of the 50S subunit. The chain is Large ribosomal subunit protein uL3 from Borrelia hermsii (strain HS1 / DAH).